Here is a 469-residue protein sequence, read N- to C-terminus: Phosphoglucosamine mutase (469 aa).

Catalysis depends on Ser-117, which acts as the Phosphoserine intermediate. Residues Ser-117, Asp-263, Asp-265, and Asp-267 each contribute to the Mg(2+) site. Residue Ser-117 is modified to Phosphoserine.

Belongs to the phosphohexose mutase family. It depends on Mg(2+) as a cofactor. In terms of processing, activated by phosphorylation.

The catalysed reaction is alpha-D-glucosamine 1-phosphate = D-glucosamine 6-phosphate. Functionally, catalyzes the conversion of glucosamine-6-phosphate to glucosamine-1-phosphate. The chain is Phosphoglucosamine mutase from Anaeromyxobacter sp. (strain Fw109-5).